We begin with the raw amino-acid sequence, 340 residues long: UDP-3-O-(3-hydroxymyristoyl)glucosamine N-acyltransferase (340 aa).

Catalysis depends on His-239, which acts as the Proton acceptor.

Belongs to the transferase hexapeptide repeat family. LpxD subfamily. Homotrimer.

It catalyses the reaction a UDP-3-O-[(3R)-3-hydroxyacyl]-alpha-D-glucosamine + a (3R)-hydroxyacyl-[ACP] = a UDP-2-N,3-O-bis[(3R)-3-hydroxyacyl]-alpha-D-glucosamine + holo-[ACP] + H(+). It carries out the reaction UDP-3-O-[(3R)-3-hydroxytetradecanoyl]-alpha-D-glucosamine + (3R)-hydroxytetradecanoyl-[ACP] = UDP-2-N,3-O-bis[(3R)-3-hydroxytetradecanoyl]-alpha-D-glucosamine + holo-[ACP] + H(+). The protein operates within glycolipid biosynthesis; lipid IV(A) biosynthesis; lipid IV(A) from (3R)-3-hydroxytetradecanoyl-[acyl-carrier-protein] and UDP-N-acetyl-alpha-D-glucosamine: step 3/6. Its function is as follows. Catalyzes the N-acylation of UDP-3-O-(hydroxytetradecanoyl)glucosamine using 3-hydroxytetradecanoyl-ACP as the acyl donor. Is involved in the biosynthesis of lipid A, a phosphorylated glycolipid that anchors the lipopolysaccharide to the outer membrane of the cell. The chain is UDP-3-O-(3-hydroxymyristoyl)glucosamine N-acyltransferase from Yersinia pestis bv. Antiqua (strain Antiqua).